Here is a 73-residue protein sequence, read N- to C-terminus: Translation initiation factor IF-1 (73 aa).

The region spanning 1-72 (MSKDDLIQFT…TKGRVILRHQ (72 aa)) is the S1-like domain.

The protein belongs to the IF-1 family. Component of the 30S ribosomal translation pre-initiation complex which assembles on the 30S ribosome in the order IF-2 and IF-3, IF-1 and N-formylmethionyl-tRNA(fMet); mRNA recruitment can occur at any time during PIC assembly.

Its subcellular location is the cytoplasm. Functionally, one of the essential components for the initiation of protein synthesis. Stabilizes the binding of IF-2 and IF-3 on the 30S subunit to which N-formylmethionyl-tRNA(fMet) subsequently binds. Helps modulate mRNA selection, yielding the 30S pre-initiation complex (PIC). Upon addition of the 50S ribosomal subunit IF-1, IF-2 and IF-3 are released leaving the mature 70S translation initiation complex. The protein is Translation initiation factor IF-1 of Rickettsia bellii (strain OSU 85-389).